Reading from the N-terminus, the 551-residue chain is Nose resistant to fluoxetine protein 5 (551 aa).

A signal peptide spans 1–20 (MSRNFHIFFLLVSIIQVGNS). The cysteines at positions 151 and 232 are disulfide-linked. The tract at residues 241–265 (EDSEQEEGNVETTVAPTPDDDNSTL) is disordered.

This sequence belongs to the BPI/LBP/Plunc superfamily. BPI/LBP family. In terms of assembly, interacts with ttr-52. In terms of tissue distribution, expressed in the body wall muscle cells and detected at the basal surface of pharyngeal cells and basal-lateral membranes of the intestine.

The protein localises to the secreted. In terms of biological role, plays a role in the uptake of a range of molecules including phosphatidylserine, lipids and xenobiotic compounds from the intestine to surrounding tissues. Possesses lipid transfer activity. Mediates transport of lipids from intestine to reproductive tract. Binds phosphatidylserine. Plays a role in efficient clearance of cell corpses by mediating phosphatidylserine appearance on phagocytic cells, thus promoting phagocytic engulfment of apoptotic cells. Vital for embryonic development. This Caenorhabditis elegans protein is Nose resistant to fluoxetine protein 5.